Here is a 219-residue protein sequence, read N- to C-terminus: MKSHREMLRGIQREAGITQRWIGKESLDRRVMEAMKAVPRHEFVPDEQRPYAYDDAPLAIGCGQTISQPYIVALMTDLLDSTPDDIILEVGTGSGYQAAVLSRLVKKVYTIETIEELAQQAEARLERLGYSNVEVQTADGYFGWPEQAPFDGIMVTAAAPSIPKPLIDQLKPEARLVLPLGAGSPQELMVVTKKENDEIDIHRVLGVSFVPLTGKHEVP.

Ser-67 is an active-site residue.

This sequence belongs to the methyltransferase superfamily. L-isoaspartyl/D-aspartyl protein methyltransferase family.

The protein resides in the cytoplasm. The catalysed reaction is [protein]-L-isoaspartate + S-adenosyl-L-methionine = [protein]-L-isoaspartate alpha-methyl ester + S-adenosyl-L-homocysteine. In terms of biological role, catalyzes the methyl esterification of L-isoaspartyl residues in peptides and proteins that result from spontaneous decomposition of normal L-aspartyl and L-asparaginyl residues. It plays a role in the repair and/or degradation of damaged proteins. The chain is Protein-L-isoaspartate O-methyltransferase 2 from Nitrosococcus oceani (strain ATCC 19707 / BCRC 17464 / JCM 30415 / NCIMB 11848 / C-107).